The primary structure comprises 462 residues: Fasciclin-like arabinogalactan protein 18 (462 aa).

The N-terminal stretch at 1-25 is a signal peptide; that stretch reads MDRCIYGCSVITIFFSFFFLLNASA. Residues asparagine 32, asparagine 77, and asparagine 293 are each glycosylated (N-linked (GlcNAc...) asparagine). 2 consecutive FAS1 domains span residues 40-185 and 271-414; these read NSNS…ERLL and VKDF…DGVL.

The protein belongs to the fasciclin-like AGP family.

It is found in the secreted. In terms of biological role, may be a cell surface adhesion protein. In Arabidopsis thaliana (Mouse-ear cress), this protein is Fasciclin-like arabinogalactan protein 18 (FLA18).